The primary structure comprises 144 residues: Maximins 3/H16 (144 aa).

The N-terminal stretch at methionine 1–alanine 18 is a signal peptide. Propeptides lie at residues arginine 19–arginine 43 and arginine 73–lysine 122. Isoleucine 143 is modified (isoleucine amide).

It belongs to the bombinin family. Expressed by the skin glands.

It localises to the secreted. In terms of biological role, maximin-3 shows antibacterial activity against both Gram-positive and Gram-negative bacteria. It also shows antimicrobial activity against the fungus C.albicans, but not against A.flavus nor P.uticale. It has little hemolytic activity. It possess a significant cytotoxicity against tumor cell lines. It possess a significant anti-HIV activity. It shows high spermicidal activity. Maximin-H16 shows antimicrobial activity against bacteria and against the fungus C.albicans. Shows strong hemolytic activity. The protein is Maximins 3/H16 of Bombina maxima (Giant fire-bellied toad).